The primary structure comprises 372 residues: Testis-specific serine/threonine-protein kinase 5 (372 aa).

The region spanning 27–302 (LLSSKKIGSG…LQQVAAHCWM (276 aa)) is the Protein kinase domain. Residues 33 to 41 (IGSGAFSKV) and K72 each bind ATP. Catalysis depends on D173, which acts as the Proton acceptor. Residues 314 to 372 (GAPREQDHSWSTVAPDNTEPDRDTRHARSKGSSSSSGRTSPRRPSLAQLCNTWKPAPEQ) are disordered. Positions 343–358 (KGSSSSSGRTSPRRPS) are enriched in low complexity.

Belongs to the protein kinase superfamily. CAMK Ser/Thr protein kinase family. Mg(2+) is required as a cofactor. Autophosphorylated.

The enzyme catalyses L-seryl-[protein] + ATP = O-phospho-L-seryl-[protein] + ADP + H(+). It catalyses the reaction L-threonyl-[protein] + ATP = O-phospho-L-threonyl-[protein] + ADP + H(+). Its activity is regulated as follows. Activated by phosphorylation on Thr-207, potentially by autophosphorylation. May be involved in a signaling pathway during male germ cell development or mature sperm function. This chain is Testis-specific serine/threonine-protein kinase 5, found in Mus musculus (Mouse).